A 388-amino-acid chain; its full sequence is Chalcone synthase D (388 aa).

Cys-164 is an active-site residue.

It belongs to the thiolase-like superfamily. Chalcone/stilbene synthases family.

It carries out the reaction (E)-4-coumaroyl-CoA + 3 malonyl-CoA + 3 H(+) = 2',4,4',6'-tetrahydroxychalcone + 3 CO2 + 4 CoA. Its pathway is secondary metabolite biosynthesis; flavonoid biosynthesis. The primary product of this enzyme is 4,2',4',6'-tetrahydroxychalcone (also termed naringenin-chalcone or chalcone) which can under specific conditions spontaneously isomerize into naringenin. This chain is Chalcone synthase D (CHSD), found in Ipomoea nil (Japanese morning glory).